We begin with the raw amino-acid sequence, 856 residues long: Genome polyprotein (856 aa).

In terms of domain architecture, Peptidase S30 spans 141–284; that stretch reads KLTESQMNHL…QGVLNSMVQF (144 aa). Residues His192, Asp201, and Ser235 each act as for P1 proteinase activity in the active site. Positions 592-594 match the Involved in virions binding and aphid transmission motif; it reads PTK. Residues 618-740 form the Peptidase C6 domain; that stretch reads LYIAKQGYCY…ESEIKHYRVG (123 aa). Catalysis depends on for helper component proteinase activity residues Cys626 and His699.

It belongs to the potyviridae genome polyprotein family. In terms of processing, genome polyprotein of potyviruses undergoes post-translational proteolytic processing by the main proteinase NIa-pro resulting in the production of at least ten individual proteins. The P1 proteinase and the HC-pro cleave only their respective C-termini autocatalytically. 6K1 is essential for proper proteolytic separation of P3 from CI.

The catalysed reaction is Hydrolyzes a Gly-|-Gly bond at its own C-terminus, commonly in the sequence -Tyr-Xaa-Val-Gly-|-Gly, in the processing of the potyviral polyprotein.. Functionally, required for aphid transmission and also has proteolytic activity. Only cleaves a Gly-Gly dipeptide at its own C-terminus. Interacts with virions and aphid stylets. Acts as a suppressor of RNA-mediated gene silencing, also known as post-transcriptional gene silencing (PTGS), a mechanism of plant viral defense that limits the accumulation of viral RNAs. May have RNA-binding activity. The protein is Genome polyprotein of Potato virus Y (strain C) (PVY).